Consider the following 305-residue polypeptide: Ornithine carbamoyltransferase (305 aa).

Carbamoyl phosphate contacts are provided by residues 53–56, Gln-80, Arg-104, and 131–134; these read STRT and HPCQ. L-ornithine-binding positions include Asn-162, Asp-219, and 223–224; that span reads SM. Carbamoyl phosphate is bound by residues 259–260 and Arg-287; that span reads CL.

It belongs to the aspartate/ornithine carbamoyltransferase superfamily. OTCase family.

It is found in the cytoplasm. It catalyses the reaction carbamoyl phosphate + L-ornithine = L-citrulline + phosphate + H(+). The protein operates within amino-acid biosynthesis; L-arginine biosynthesis; L-arginine from L-ornithine and carbamoyl phosphate: step 1/3. Its function is as follows. Reversibly catalyzes the transfer of the carbamoyl group from carbamoyl phosphate (CP) to the N(epsilon) atom of ornithine (ORN) to produce L-citrulline. This Psychrobacter cryohalolentis (strain ATCC BAA-1226 / DSM 17306 / VKM B-2378 / K5) protein is Ornithine carbamoyltransferase.